Consider the following 366-residue polypeptide: Cytochrome c peroxidase, mitochondrial (366 aa).

Residues 1–46 constitute a mitochondrion transit peptide; it reads MASAARSASRAFLRSTPTTSSFRPAVRAARFALPAQGFRAAGRRGY. His127 serves as the catalytic Proton acceptor. His250 contributes to the heme b binding site. The Tryptophan radical intermediate role is filled by Trp266.

Belongs to the peroxidase family. Cytochrome c peroxidase subfamily. Forms a one-to-one complex with cytochrome c. The cofactor is heme b.

It is found in the mitochondrion matrix. Its subcellular location is the mitochondrion intermembrane space. It catalyses the reaction 2 Fe(II)-[cytochrome c] + H2O2 + 2 H(+) = 2 Fe(III)-[cytochrome c] + 2 H2O. Functionally, destroys radicals which are normally produced within the cells and which are toxic to biological systems. This is Cytochrome c peroxidase, mitochondrial (ccp1) from Aspergillus fumigatus (strain ATCC MYA-4609 / CBS 101355 / FGSC A1100 / Af293) (Neosartorya fumigata).